A 397-amino-acid polypeptide reads, in one-letter code: 1-deoxy-D-xylulose 5-phosphate reductoisomerase (397 aa).

Positions 12, 13, 14, 15, 38, 39, 40, and 126 each coordinate NADPH. Lys127 is a binding site for 1-deoxy-D-xylulose 5-phosphate. Glu128 is a binding site for NADPH. Mn(2+) is bound at residue Asp152. Residues Ser153, Glu154, Ser188, and His211 each contribute to the 1-deoxy-D-xylulose 5-phosphate site. A Mn(2+)-binding site is contributed by Glu154. Gly217 is a binding site for NADPH. The 1-deoxy-D-xylulose 5-phosphate site is built by Ser224, Asn229, Lys230, and Glu233. Mn(2+) is bound at residue Glu233.

This sequence belongs to the DXR family. Mg(2+) serves as cofactor. It depends on Mn(2+) as a cofactor.

It carries out the reaction 2-C-methyl-D-erythritol 4-phosphate + NADP(+) = 1-deoxy-D-xylulose 5-phosphate + NADPH + H(+). It functions in the pathway isoprenoid biosynthesis; isopentenyl diphosphate biosynthesis via DXP pathway; isopentenyl diphosphate from 1-deoxy-D-xylulose 5-phosphate: step 1/6. Catalyzes the NADPH-dependent rearrangement and reduction of 1-deoxy-D-xylulose-5-phosphate (DXP) to 2-C-methyl-D-erythritol 4-phosphate (MEP). The protein is 1-deoxy-D-xylulose 5-phosphate reductoisomerase of Haemophilus influenzae (strain ATCC 51907 / DSM 11121 / KW20 / Rd).